We begin with the raw amino-acid sequence, 932 residues long: Protein translocase subunit SecA (932 aa).

ATP-binding positions include glutamine 87, 105-109 (GEGKT), and aspartate 515. Cysteine 916, cysteine 918, cysteine 927, and histidine 928 together coordinate Zn(2+).

It belongs to the SecA family. In terms of assembly, monomer and homodimer. Part of the essential Sec protein translocation apparatus which comprises SecA, SecYEG and auxiliary proteins SecDF-YajC and YidC. Zn(2+) serves as cofactor.

Its subcellular location is the cell inner membrane. It is found in the cytoplasm. It catalyses the reaction ATP + H2O + cellular proteinSide 1 = ADP + phosphate + cellular proteinSide 2.. In terms of biological role, part of the Sec protein translocase complex. Interacts with the SecYEG preprotein conducting channel. Has a central role in coupling the hydrolysis of ATP to the transfer of proteins into and across the cell membrane, serving both as a receptor for the preprotein-SecB complex and as an ATP-driven molecular motor driving the stepwise translocation of polypeptide chains across the membrane. This chain is Protein translocase subunit SecA, found in Burkholderia lata (strain ATCC 17760 / DSM 23089 / LMG 22485 / NCIMB 9086 / R18194 / 383).